The following is a 216-amino-acid chain: MKIGILGGTFNPIHNAHLRIAEEVRDRFDLGRVMFVPAASPPHKPLAGELSFDVRYRMVQLAIADNPAFTISDVEGRRGGKSYSIDTLKGLHSAFPHDEFFFIVGSDSFLDIGSWREYAAIFNLCNIVVVERPGAAVAALDAALPVAIAHEFCYYEAEKRLAHRSGYSVYSIAGTLLDISSSDIRELARLGRSIRYLVPQSVEHYIKEQRIYNDAR.

The protein belongs to the NadD family.

The enzyme catalyses nicotinate beta-D-ribonucleotide + ATP + H(+) = deamido-NAD(+) + diphosphate. The protein operates within cofactor biosynthesis; NAD(+) biosynthesis; deamido-NAD(+) from nicotinate D-ribonucleotide: step 1/1. Functionally, catalyzes the reversible adenylation of nicotinate mononucleotide (NaMN) to nicotinic acid adenine dinucleotide (NaAD). This Geotalea uraniireducens (strain Rf4) (Geobacter uraniireducens) protein is Probable nicotinate-nucleotide adenylyltransferase.